The sequence spans 598 residues: Nuclear receptor subfamily 4 group A member 2 (598 aa).

A disordered region spans residues 1-22 (MPCVQAQYGSSPQGASPASQSY). Positions 8-22 (YGSSPQGASPASQSY) are enriched in low complexity. The segment at residues 260 to 335 (EGLCAVCGDN…VGMVKEVVRT (76 aa)) is a DNA-binding region (nuclear receptor). 2 NR C4-type zinc fingers span residues 263-283 (CAVC…CEGC) and 299-323 (CLAN…FQKC). Residues 287–314 (FKRTVQKNAKYVCLANKNCPVDKRRRNR) carry the Bipartite nuclear localization signal (NLS1) motif. The interval 337-361 (SLKGRRGRLPSKPKSPQDPSPPSPP) is disordered. The Nuclear localization signal (NLS1) signature appears at 338–350 (LKGRRGRLPSKPK). A compositionally biased stretch (pro residues) spans 352-361 (PQDPSPPSPP). Positions 360 to 595 (PPVSLISALV…AIIDKLFLDT (236 aa)) constitute an NR LBD domain. Residues 443-452 (FLELFVLRLA) carry the nuclear export sequence (NES1) motif. The nuclear export sequence (NES2) signature appears at 568–577 (QGLQRIFYLK).

This sequence belongs to the nuclear hormone receptor family. NR4 subfamily. Interacts with SFPQ, NCOR2, SIN3A and HADC1. The interaction with NCOR2 increases in the absence of PITX3. Interacts with PER2. Brain.

The protein resides in the cytoplasm. The protein localises to the nucleus. Functionally, transcriptional regulator which is important for the differentiation and maintenance of meso-diencephalic dopaminergic (mdDA) neurons during development. It is crucial for expression of a set of genes such as SLC6A3, SLC18A2, TH and DRD2 which are essential for development of mdDA neurons. This is Nuclear receptor subfamily 4 group A member 2 (Nr4a2) from Mus musculus (Mouse).